Reading from the N-terminus, the 459-residue chain is GTPase Der (459 aa).

2 EngA-type G domains span residues 4–169 (PLVA…PEVT) and 179–355 (IAVS…AAHR). Residues 10 to 17 (GRPNVGKS), 57 to 61 (DTGGL), 120 to 123 (NKCE), 185 to 192 (GRPNVGKS), 232 to 236 (DTAGI), and 297 to 300 (NKWD) each bind GTP. Positions 356-441 (KRVPTAVVNE…PIRFLWRGKS (86 aa)) constitute a KH-like domain.

Belongs to the TRAFAC class TrmE-Era-EngA-EngB-Septin-like GTPase superfamily. EngA (Der) GTPase family. In terms of assembly, associates with the 50S ribosomal subunit.

GTPase that plays an essential role in the late steps of ribosome biogenesis. The protein is GTPase Der of Synechococcus sp. (strain JA-2-3B'a(2-13)) (Cyanobacteria bacterium Yellowstone B-Prime).